The following is a 427-amino-acid chain: Transcription termination factor Rho (427 aa).

The Rho RNA-BD domain maps to 51-125; the sequence is LLFMEGVLEI…LHVEAVNGDD (75 aa). ATP is bound by residues 168–173, 180–185, and Arg211; these read GFGQRG and KAGKTM.

This sequence belongs to the Rho family. In terms of assembly, homohexamer. The homohexamer assembles into an open ring structure.

Functionally, facilitates transcription termination by a mechanism that involves Rho binding to the nascent RNA, activation of Rho's RNA-dependent ATPase activity, and release of the mRNA from the DNA template. The chain is Transcription termination factor Rho from Bacillus subtilis (strain 168).